The chain runs to 560 residues: Embryonal Fyn-associated substrate (560 aa).

An SH3 domain is found at 5–68 (TSAQLARALY…PANRVKLLPA (64 aa)). 2 disordered regions span residues 176–219 (VVPQ…LYAA) and 241–372 (ANGE…NEYE). The segment covering 198 to 210 (AELERDPEWEGGR) has biased composition (basic and acidic residues). Tyrosine 253 carries the post-translational modification Phosphotyrosine; by SRC. The span at 259–268 (GPEPPSPEPP) shows a compositional bias: pro residues. 2 consecutive short sequence motifs (SH3-binding) follow at residues 304-310 (RPLPALP) and 334-340 (RPLPPPP). Residues 305–315 (PLPALPVSEAP) show a composition bias toward low complexity. Basic and acidic residues predominate over residues 351-361 (PEGDPECREVA). Positions 437–487 (FYAGQCQSHYSALQAAVAALVASTQANQPPCLFVPHGKRVVVAAHRLVFVG) are divergent helix-loop-helix motif.

Belongs to the CAS family. In terms of processing, phosphorylated on multiple tyrosine residues. Phosphorylated on tyrosines by FYN and SRC. In terms of tissue distribution, widely expressed. Higher levels found in placenta and embryo. Lower levels found in brain, brainstem, muscle and lung. No expression in liver and intestine.

Its function is as follows. Docking protein which plays a central coordinating role for tyrosine-kinase-based signaling related to cell adhesion. May serve as an activator of SRC and a downstream effector. Interacts with the SH3 domain of FYN and with CRK, SRC, and YES. This Mus musculus (Mouse) protein is Embryonal Fyn-associated substrate (Efs).